The sequence spans 287 residues: Nucleoid occlusion protein (287 aa).

Residues 146–165 constitute a DNA-binding region (H-T-H motif); the sequence is EALAQRVGKSQSAIANKMRL.

Belongs to the ParB family.

Its subcellular location is the cytoplasm. The protein localises to the nucleoid. Effects nucleoid occlusion by binding relatively nonspecifically to DNA and preventing the assembly of the division machinery in the vicinity of the nucleoid, especially under conditions that disturb the cell cycle. It helps to coordinate cell division and chromosome segregation by preventing the formation of the Z ring through the nucleoid, which would cause chromosome breakage. This is Nucleoid occlusion protein from Listeria monocytogenes serotype 4a (strain HCC23).